A 463-amino-acid chain; its full sequence is Proton-coupled folate transporter (463 aa).

Residues Met-1–Val-27 lie on the Cytoplasmic side of the membrane. A helical membrane pass occupies residues Glu-28 to Thr-46. The Extracellular segment spans residues Gln-47–Thr-86. N-linked (GlcNAc...) asparagine glycosylation is found at Asn-60 and Asn-70. Cys-67 and Cys-302 are joined by a disulfide. Residues Ala-87–Ser-112 form a helical membrane-spanning segment. At Asp-113–Gly-116 the chain is on the cytoplasmic side. The helical transmembrane segment at Arg-117 to Met-139 threads the bilayer. Topologically, residues Tyr-140–His-144 are extracellular. Residues Val-145–Ser-158 traverse the membrane as a helical segment. The Cytoplasmic portion of the chain corresponds to Gly-159–Arg-181. Positions 160 and 189 each coordinate H(+). Residues Thr-182–Arg-207 traverse the membrane as a helical segment. The Extracellular portion of the chain corresponds to Lys-208–Tyr-212. Residues Ile-213 to Tyr-231 form a helical membrane-spanning segment. Over Phe-232 to Lys-270 the chain is Cytoplasmic. A helical transmembrane segment spans residues Leu-271–Val-293. His-285 serves as a coordination point for H(+). Residues Leu-294–Asp-306 lie on the Extracellular side of the membrane. The chain crosses the membrane as a helical span at residues Leu-307 to Phe-329. Residues Gln-330–Asp-335 are Cytoplasmic-facing. A helical transmembrane segment spans residues Ser-336–Leu-355. The Extracellular portion of the chain corresponds to Ala-356–Thr-359. A helical transmembrane segment spans residues Pro-360–Arg-380. The Cytoplasmic portion of the chain corresponds to Ser-381–Gln-392. A helical transmembrane segment spans residues Gly-393–Tyr-418. Over Pro-419 to Lys-426 the chain is Extracellular. The helical transmembrane segment at Gly-427–Gly-445 threads the bilayer. Topologically, residues Leu-446–Ser-463 are cytoplasmic.

It belongs to the major facilitator superfamily. SLC46A family. In terms of assembly, monomer.

The protein resides in the cell membrane. Its subcellular location is the apical cell membrane. It is found in the basolateral cell membrane. The protein localises to the endosome membrane. It localises to the cytoplasm. It carries out the reaction folate(in) + H(+)(in) = folate(out) + H(+)(out). The catalysed reaction is (6S)-5-methyl-5,6,7,8-tetrahydrofolate(in) + H(+)(in) = (6S)-5-methyl-5,6,7,8-tetrahydrofolate(out) + H(+)(out). It catalyses the reaction methotrexate(in) + H(+)(in) = methotrexate(out) + H(+)(out). The enzyme catalyses pemetrexed(in) + H(+)(in) = pemetrexed(out) + H(+)(out). Functionally, proton-coupled folate symporter that mediates folate absorption using an H(+) gradient as a driving force. Involved in the intestinal absorption of folates at the brush-border membrane of the proximal jejunum, and the transport from blood to cerebrospinal fluid across the choroid plexus. Functions at acidic pH via alternate outward- and inward-open conformation states. Protonation of residues in the outward open state primes the protein for transport. Binding of folate promotes breaking of salt bridge network and subsequent closure of the extracellular gate, leading to the inward-open state and release of protons and folate. Also able to transport antifolate drugs, such as methotrexate and pemetrexed. Also acts as a lower-affinity, pH-independent heme carrier protein and constitutes the main importer of heme in the intestine. Imports heme in the retina and retinal pigment epithelium, in neurons of the hippocampus, in hepatocytes and in the renal epithelial cells. The polypeptide is Proton-coupled folate transporter (Xenopus laevis (African clawed frog)).